The sequence spans 498 residues: ATP synthase subunit beta, chloroplastic (498 aa).

ATP is bound at residue 172-179 (GGAGVGKT).

It belongs to the ATPase alpha/beta chains family. In terms of assembly, F-type ATPases have 2 components, CF(1) - the catalytic core - and CF(0) - the membrane proton channel. CF(1) has five subunits: alpha(3), beta(3), gamma(1), delta(1), epsilon(1). CF(0) has four main subunits: a(1), b(1), b'(1) and c(9-12).

It is found in the plastid. Its subcellular location is the chloroplast thylakoid membrane. The enzyme catalyses ATP + H2O + 4 H(+)(in) = ADP + phosphate + 5 H(+)(out). Produces ATP from ADP in the presence of a proton gradient across the membrane. The catalytic sites are hosted primarily by the beta subunits. The protein is ATP synthase subunit beta, chloroplastic of Beta vulgaris (Sugar beet).